A 210-amino-acid chain; its full sequence is UMP-CMP kinase 3 (210 aa).

Residue 34–39 (GSGKGT) coordinates ATP. The tract at residues 54–83 (SAGDLLRAEIKSGSENGTMIENMIKEGKIV) is NMP. Residues R60, 81–83 (KIV), and 108–111 (GFPR) each bind a ribonucleoside 5'-phosphate. Residue N115 coordinates CMP. The tract at residues 146-154 (GRNQGRVDD) is LID. R147 provides a ligand contact to ATP. A ribonucleoside 5'-phosphate is bound by residues R151 and R162. K190 contributes to the ATP binding site.

Belongs to the adenylate kinase family. UMP-CMP kinase subfamily. In terms of assembly, monomer. The cofactor is Mg(2+).

It is found in the cytoplasm. Its subcellular location is the nucleus. The catalysed reaction is UMP + ATP = UDP + ADP. The enzyme catalyses CMP + ATP = CDP + ADP. It catalyses the reaction dCMP + ATP = dCDP + ADP. Functionally, catalyzes the phosphorylation of pyrimidine nucleoside monophosphates at the expense of ATP. Plays an important role in de novo pyrimidine nucleotide biosynthesis. Has preference for UMP and CMP as phosphate acceptors. The protein is UMP-CMP kinase 3 (URA6) of Oryza sativa subsp. japonica (Rice).